Here is a 517-residue protein sequence, read N- to C-terminus: DNA-(apurinic or apyrimidinic site) endonuclease 2 (517 aa).

Mg(2+)-binding residues include Asn9 and Glu34. A Claspin-like CKB motif motif is present at residues 82-90; sequence EEGLSGVFC. Tyr142 is an active-site residue. Residues Asp183, Asn185, Asp299, and His300 each contribute to the Mg(2+) site. Catalysis depends on Asp183, which acts as the Proton donor/acceptor. The active-site Proton acceptor is His300. Polar residues predominate over residues 347 to 362; the sequence is GNTTEESSELTGTPSF. The tract at residues 347-366 is disordered; it reads GNTTEESSELTGTPSFTEGA. A PCNA interacting protein (PIP) box motif is present at residues 395 to 402; it reads QGNLLSFF. 4 residues coordinate Zn(2+): Cys463, His466, Cys489, and Cys503. The GRF-type zinc-finger motif lies at 463–512; it reads CKGHSEPCVLRTVKKAGPNCGRQFYVCARPEGHSSNPQARCNFFLWLTKK.

The protein belongs to the DNA repair enzymes AP/ExoA family. In terms of assembly, interacts (via PIP box and GRF-type Zinc finger domain) with pcna; the interaction is required for 3 -5 SSB end resection, assembly of a checkpoint protein complex to SSB sites, and SSB signaling. Interacts with chek1. Requires Mg(2+) as cofactor. Mn(2+) is required as a cofactor. In terms of tissue distribution, expressed in eggs (at protein level).

The protein localises to the nucleus. The protein resides in the chromosome. Its subcellular location is the cytoplasm. It localises to the mitochondrion. It carries out the reaction Exonucleolytic cleavage in the 3'- to 5'-direction to yield nucleoside 5'-phosphates.. 3'-5' nuclease activity is stimulated in presence of pcna. Functionally, functions as a weak apurinic/apyrimidinic (AP) endodeoxyribonuclease in the DNA base excision repair (BER) pathway of DNA lesions induced by oxidative and alkylating agents. Initiates repair of AP sites in DNA by catalyzing hydrolytic incision of the phosphodiester backbone immediately adjacent to the damage, generating a single-strand break with 5'-deoxyribose phosphate and 3'-hydroxyl ends. Exhibits 3'-5' exonuclease activity on a 3' DNA substrate; nuclease activity is stimulated by interaction with pcna. Has a preference for the 3' recessed ends over blunt-ended substrates, in both the presence and the absence of pcna. Generates single-stranded DNA (ssDNA) via 3'-5' single-strand break (SSB) end resection, thereby promoting a DNA damage response via replication protein A (rpa2)-binding to ssDNA and the recruitment of a checkpoint protein complex, including atr, atr-interacting protein atrip, and rad9, to damage sites following oxidative stress. Plays a role in reversing blocked 3' DNA ends, problematic lesions that preclude DNA synthesis. Required for chek1 phosphorylation induced by hydrogen peroxide but not by stalled replication forks. The chain is DNA-(apurinic or apyrimidinic site) endonuclease 2 from Xenopus laevis (African clawed frog).